We begin with the raw amino-acid sequence, 1016 residues long: Rho family-interacting cell polarization regulator 2 (1016 aa).

Phosphoserine is present on residues Ser21 and Ser37. The interval 44-73 is disordered; sequence AVKKPQAKLKKMHNLGHKNSSPPKEPQPKR. The segment covering 48 to 59 has biased composition (basic residues); the sequence is PQAKLKKMHNLG. The tract at residues 55-113 is involved in cell filopodia formation; the sequence is MHNLGHKNSSPPKEPQPKRVEEVYRALKNGLDEYLEVHQTELDKLTTQLKDMRRNSRLG. Residues 85–112 adopt a coiled-coil conformation; that stretch reads LDEYLEVHQTELDKLTTQLKDMRRNSRL. At Ser341 the chain carries Phosphoserine. Residues 414–428 are compositionally biased toward polar residues; that stretch reads TSTELPPGSQSSQNE. Residues 414-469 are disordered; the sequence is TSTELPPGSQSSQNEGLKDSSSASCSSSSREGSEPRPHPEGETQGLGKPEGCPVAT. The segment covering 433 to 442 has biased composition (low complexity); sequence SSSASCSSSS. Residues 444–454 show a composition bias toward basic and acidic residues; the sequence is EGSEPRPHPEG. Residues Ser520 and Ser532 each carry the phosphoserine modification. The interval 636 to 656 is disordered; that stretch reads DSVFSDTETEKNSYRSVHPEA. The span at 643–656 shows a compositional bias: basic and acidic residues; it reads ETEKNSYRSVHPEA.

It belongs to the RIPOR family. In terms of assembly, homooligomer; homooligomerization is regulated by RHOC and leads to the formation of concatemers through the association of N- and C-termini. Interacts (phosphorylated form) with 14-3-3 proteins; these interactions occur during myogenic cell differentiation and also induces T cell proliferation arrest. Interacts (phosphorylated form) with HDAC6; this interaction occurs during early myogenic differentiation, prevents HDAC6 to deacetylate tubulin and also induces T cell proliferation arrest. Interacts with DYSF; this interaction occurs during early myogenic differentiation. Interacts with MYOF. Interacts (via active GTP- or inactive GDP-bound forms) with RHOA; this interaction is direct, blocks the loading of GTP to RHOA and decreases upon chemokine CCL19 stimulation in primary T lymphocytes. Interacts with RHOC. Interacts (via phosphorylated form) with YWHAB; this interaction occurs in a chemokine-dependent manner and does not compete for binding of RIPOR2 with RHOA nor blocks inhibition of RIPOR2-mediated RHOA activity. Interacts with YWHAE. Interacts with YWHAQ. In terms of processing, phosphorylated. Chemokine-induced phosphorylation in neutrophils occurs in a PKC- and AKT-dependent manner, resulting in RIPOR2 interaction with YWHAB and stabilization. Phosphorylated by PKCA, AKT1 and MAPKAPK1A; in vitro.

The protein localises to the cytoplasm. It is found in the cytoskeleton. It localises to the cell projection. The protein resides in the filopodium. Its subcellular location is the apical cell membrane. The protein localises to the stereocilium. It is found in the stereocilium membrane. In terms of biological role, acts as an inhibitor of the small GTPase RHOA and plays several roles in the regulation of myoblast and hair cell differentiation, lymphocyte T proliferation and neutrophil polarization. Plays a role in fetal mononuclear myoblast differentiation by promoting filopodia and myotube formation. Maintains naive T lymphocytes in a quiescent state and prevents chemokine-induced T lymphocyte responses, such as cell adhesion, polarization and migration. Involved also in the regulation of neutrophil polarization, chemotaxis and adhesion. Required for normal development of inner and outer hair cell stereocilia within the cochlea of the inner ear. Plays a role for maintaining the structural organization of the basal domain of stereocilia. Involved in mechanosensory hair cell function. Required for normal hearing. This Bos taurus (Bovine) protein is Rho family-interacting cell polarization regulator 2.